We begin with the raw amino-acid sequence, 459 residues long: MNLRVKQKIPLKIKRMGINGEGIGFYKRTLVFVPGALKGEEIFCQITSVKHNFVQARLLTINKKSKFRVRPACPIYEECGGCQIMHLRYDKQLDFKKDLLKQALKKFKPQGYETYDIRATIGMEHPQHYRAKLQFQTRKFGGSVRAGLFKEQSHHLVDIKDCLIQDELTQKIVNRVCQLLDDYNIPVYDERRHFAGVRTIMVRKSQATNQVQLIFVTSKEVNLVGIIRDLTGYFPEIKTVAVNFNSSKSSAIYGQKTEILWGIDSISEEVLDYSFSLSPRAFYQLNPQQTQVLYHQALQALDVTAEDHLIDAYCGVGSIGLAFANKVKSVRGMDIIPEAITDAKRNAERMGYTNTYYEMGKAENVIPKWYKDGYQASALIVDPPRTGLDEKLLKTLLTYQPEKMVYVSCNVSTLARDLVQLVKVYEVNYIQSVDMFPHTARTEAVVKLVKRKQNSCSKK.

In terms of domain architecture, TRAM spans 2-60; it reads NLRVKQKIPLKIKRMGINGEGIGFYKRTLVFVPGALKGEEIFCQITSVKHNFVQARLLT. 4 residues coordinate [4Fe-4S] cluster: C73, C79, C82, and C162. The S-adenosyl-L-methionine site is built by Q284, Y313, D334, and D382. C409 serves as the catalytic Nucleophile.

This sequence belongs to the class I-like SAM-binding methyltransferase superfamily. RNA M5U methyltransferase family.

This is an uncharacterized protein from Streptococcus mutans serotype c (strain ATCC 700610 / UA159).